A 259-amino-acid chain; its full sequence is Phosphate import ATP-binding protein PstB 1 (259 aa).

An ABC transporter domain is found at 13-254 (IQVRGLEFFY…PSKTQTEDYI (242 aa)). 45-52 (GPSGCGKS) lines the ATP pocket.

This sequence belongs to the ABC transporter superfamily. Phosphate importer (TC 3.A.1.7) family. The complex is composed of two ATP-binding proteins (PstB), two transmembrane proteins (PstC and PstA) and a solute-binding protein (PstS).

The protein resides in the cell inner membrane. It catalyses the reaction phosphate(out) + ATP + H2O = ADP + 2 phosphate(in) + H(+). In terms of biological role, part of the ABC transporter complex PstSACB involved in phosphate import. Responsible for energy coupling to the transport system. The sequence is that of Phosphate import ATP-binding protein PstB 1 from Pseudomonas syringae pv. tomato (strain ATCC BAA-871 / DC3000).